The following is a 340-amino-acid chain: Holliday junction branch migration complex subunit RuvB (340 aa).

The interval 1 to 184 is large ATPase domain (RuvB-L); sequence MNENLDPTTK…FGISSRLQYY (184 aa). ATP-binding positions include Leu-23, Arg-24, Gly-65, Lys-68, Thr-69, Thr-70, 131–133, Arg-174, Tyr-184, and Arg-221; that span reads EDF. Thr-69 contributes to the Mg(2+) binding site. A small ATPAse domain (RuvB-S) region spans residues 185–255; the sequence is STELLTTIVE…ISKYALKALN (71 aa). The tract at residues 258 to 340 is head domain (RuvB-H); the sequence is AHGLDEMDNK…INTNIQGGLF (83 aa). Positions 313 and 318 each coordinate DNA.

Belongs to the RuvB family. As to quaternary structure, homohexamer. Forms an RuvA(8)-RuvB(12)-Holliday junction (HJ) complex. HJ DNA is sandwiched between 2 RuvA tetramers; dsDNA enters through RuvA and exits via RuvB. An RuvB hexamer assembles on each DNA strand where it exits the tetramer. Each RuvB hexamer is contacted by two RuvA subunits (via domain III) on 2 adjacent RuvB subunits; this complex drives branch migration. In the full resolvosome a probable DNA-RuvA(4)-RuvB(12)-RuvC(2) complex forms which resolves the HJ.

The protein localises to the cytoplasm. It catalyses the reaction ATP + H2O = ADP + phosphate + H(+). Functionally, the RuvA-RuvB-RuvC complex processes Holliday junction (HJ) DNA during genetic recombination and DNA repair, while the RuvA-RuvB complex plays an important role in the rescue of blocked DNA replication forks via replication fork reversal (RFR). RuvA specifically binds to HJ cruciform DNA, conferring on it an open structure. The RuvB hexamer acts as an ATP-dependent pump, pulling dsDNA into and through the RuvAB complex. RuvB forms 2 homohexamers on either side of HJ DNA bound by 1 or 2 RuvA tetramers; 4 subunits per hexamer contact DNA at a time. Coordinated motions by a converter formed by DNA-disengaged RuvB subunits stimulates ATP hydrolysis and nucleotide exchange. Immobilization of the converter enables RuvB to convert the ATP-contained energy into a lever motion, pulling 2 nucleotides of DNA out of the RuvA tetramer per ATP hydrolyzed, thus driving DNA branch migration. The RuvB motors rotate together with the DNA substrate, which together with the progressing nucleotide cycle form the mechanistic basis for DNA recombination by continuous HJ branch migration. Branch migration allows RuvC to scan DNA until it finds its consensus sequence, where it cleaves and resolves cruciform DNA. This Flavobacterium johnsoniae (strain ATCC 17061 / DSM 2064 / JCM 8514 / BCRC 14874 / CCUG 350202 / NBRC 14942 / NCIMB 11054 / UW101) (Cytophaga johnsonae) protein is Holliday junction branch migration complex subunit RuvB.